A 245-amino-acid polypeptide reads, in one-letter code: Biosynthetic peptidoglycan transglycosylase (245 aa).

The helical transmembrane segment at 20–42 threads the bilayer; that stretch reads VYAGSVFAGAWLATQLFYLAQIA.

This sequence belongs to the glycosyltransferase 51 family.

Its subcellular location is the cell inner membrane. It catalyses the reaction [GlcNAc-(1-&gt;4)-Mur2Ac(oyl-L-Ala-gamma-D-Glu-L-Lys-D-Ala-D-Ala)](n)-di-trans,octa-cis-undecaprenyl diphosphate + beta-D-GlcNAc-(1-&gt;4)-Mur2Ac(oyl-L-Ala-gamma-D-Glu-L-Lys-D-Ala-D-Ala)-di-trans,octa-cis-undecaprenyl diphosphate = [GlcNAc-(1-&gt;4)-Mur2Ac(oyl-L-Ala-gamma-D-Glu-L-Lys-D-Ala-D-Ala)](n+1)-di-trans,octa-cis-undecaprenyl diphosphate + di-trans,octa-cis-undecaprenyl diphosphate + H(+). Its pathway is cell wall biogenesis; peptidoglycan biosynthesis. Peptidoglycan polymerase that catalyzes glycan chain elongation from lipid-linked precursors. The chain is Biosynthetic peptidoglycan transglycosylase from Burkholderia lata (strain ATCC 17760 / DSM 23089 / LMG 22485 / NCIMB 9086 / R18194 / 383).